The primary structure comprises 171 residues: 3-hydroxydecanoyl-[acyl-carrier-protein] dehydratase (171 aa).

Histidine 71 is an active-site residue.

It belongs to the thioester dehydratase family. FabA subfamily. As to quaternary structure, homodimer.

The protein resides in the cytoplasm. It carries out the reaction a (3R)-hydroxyacyl-[ACP] = a (2E)-enoyl-[ACP] + H2O. The enzyme catalyses (3R)-hydroxydecanoyl-[ACP] = (2E)-decenoyl-[ACP] + H2O. It catalyses the reaction (2E)-decenoyl-[ACP] = (3Z)-decenoyl-[ACP]. The protein operates within lipid metabolism; fatty acid biosynthesis. Functionally, necessary for the introduction of cis unsaturation into fatty acids. Catalyzes the dehydration of (3R)-3-hydroxydecanoyl-ACP to E-(2)-decenoyl-ACP and then its isomerization to Z-(3)-decenoyl-ACP. Can catalyze the dehydratase reaction for beta-hydroxyacyl-ACPs with saturated chain lengths up to 16:0, being most active on intermediate chain length. This chain is 3-hydroxydecanoyl-[acyl-carrier-protein] dehydratase, found in Sinorhizobium medicae (strain WSM419) (Ensifer medicae).